A 311-amino-acid chain; its full sequence is MATLIDADLLTAIVTPFDENKKIDFDSLKKLTNYLIDQGCNGFVIGGTTGETPTLTHDEKIELYKQFGQIVNGRAVVIAGTGSNNTAETIKFTNEVAEIDGIDYALVVVPPYNKPNQRSMVAHFTAVNDNVKMPFLIYNIPGRTGVRMEKETVVQLSQLDNIKGIKQCASLEEMEYIIDHKAAGFQVFTGEDTQALTARLLGANGVVSVASHIYTKEMRRMYDALYEGKYPEAAKIQRWLTLRMQALFMYPSPSPVKAVLNAQGFETGDCRLPLVALNDEEKVTLAQHLGLEDNALLQKLPLDLGKDLEND.

Thr49 is a pyruvate binding site. Catalysis depends on Tyr138, which acts as the Proton donor/acceptor. Lys166 (schiff-base intermediate with substrate) is an active-site residue. Pyruvate is bound at residue Val207.

It belongs to the DapA family. As to quaternary structure, homotetramer; dimer of dimers.

The protein resides in the cytoplasm. The catalysed reaction is L-aspartate 4-semialdehyde + pyruvate = (2S,4S)-4-hydroxy-2,3,4,5-tetrahydrodipicolinate + H2O + H(+). It participates in amino-acid biosynthesis; L-lysine biosynthesis via DAP pathway; (S)-tetrahydrodipicolinate from L-aspartate: step 3/4. Functionally, catalyzes the condensation of (S)-aspartate-beta-semialdehyde [(S)-ASA] and pyruvate to 4-hydroxy-tetrahydrodipicolinate (HTPA). This Lactobacillus helveticus (strain DPC 4571) protein is 4-hydroxy-tetrahydrodipicolinate synthase.